Here is a 220-residue protein sequence, read N- to C-terminus: Deoxyribose-phosphate aldolase (220 aa).

The active-site Proton donor/acceptor is the Asp89. Lys151 functions as the Schiff-base intermediate with acetaldehyde in the catalytic mechanism. Lys180 serves as the catalytic Proton donor/acceptor.

This sequence belongs to the DeoC/FbaB aldolase family. DeoC type 1 subfamily.

Its subcellular location is the cytoplasm. The enzyme catalyses 2-deoxy-D-ribose 5-phosphate = D-glyceraldehyde 3-phosphate + acetaldehyde. Its pathway is carbohydrate degradation; 2-deoxy-D-ribose 1-phosphate degradation; D-glyceraldehyde 3-phosphate and acetaldehyde from 2-deoxy-alpha-D-ribose 1-phosphate: step 2/2. Its function is as follows. Catalyzes a reversible aldol reaction between acetaldehyde and D-glyceraldehyde 3-phosphate to generate 2-deoxy-D-ribose 5-phosphate. The sequence is that of Deoxyribose-phosphate aldolase from Streptococcus equi subsp. equi (strain 4047).